A 183-amino-acid chain; its full sequence is ATP-dependent protease subunit HslV (183 aa).

Residue threonine 13 is part of the active site. Na(+) contacts are provided by glycine 168, cysteine 171, and threonine 174.

This sequence belongs to the peptidase T1B family. HslV subfamily. In terms of assembly, a double ring-shaped homohexamer of HslV is capped on each side by a ring-shaped HslU homohexamer. The assembly of the HslU/HslV complex is dependent on binding of ATP.

Its subcellular location is the cytoplasm. It carries out the reaction ATP-dependent cleavage of peptide bonds with broad specificity.. With respect to regulation, allosterically activated by HslU binding. Protease subunit of a proteasome-like degradation complex believed to be a general protein degrading machinery. This Xanthomonas axonopodis pv. citri (strain 306) protein is ATP-dependent protease subunit HslV.